The chain runs to 278 residues: MSTHVDRKRITIPQIRSMKGKGSIVSLTAYTTPMAQMMDEFVDLIIVGDSTGMVAYGFNSTMSVTLDMMINHGAAVTRGVSKACVIVDMPFGSFQESPQQAYRNAARVLVETQAQGVKMEGGAELLETVDFLVRRGIPVMPHIGLTPQHANVQGGFKAQIRTEEEINAFIKLGRAFEEAGAFALLVEGAFEEAARKVTAAVTIPTVGIGASPECDGQVLVTEDILGLFSGYTPKFAKRYVDLSQPIKEAFSRYAHEVRSGEFPAMEHCFGVRKNSDGG.

Mg(2+) is bound by residues D49 and D88. Residues 49-50 (DS), D88, and K118 each bind 3-methyl-2-oxobutanoate. E120 contacts Mg(2+). E187 (proton acceptor) is an active-site residue.

This sequence belongs to the PanB family. In terms of assembly, homodecamer; pentamer of dimers. Mg(2+) serves as cofactor.

Its subcellular location is the cytoplasm. The enzyme catalyses 3-methyl-2-oxobutanoate + (6R)-5,10-methylene-5,6,7,8-tetrahydrofolate + H2O = 2-dehydropantoate + (6S)-5,6,7,8-tetrahydrofolate. The protein operates within cofactor biosynthesis; (R)-pantothenate biosynthesis; (R)-pantoate from 3-methyl-2-oxobutanoate: step 1/2. Catalyzes the reversible reaction in which hydroxymethyl group from 5,10-methylenetetrahydrofolate is transferred onto alpha-ketoisovalerate to form ketopantoate. This is 3-methyl-2-oxobutanoate hydroxymethyltransferase 1 from Hahella chejuensis (strain KCTC 2396).